Reading from the N-terminus, the 879-residue chain is Beta-mannosidase (879 aa).

Residues 1-17 (MLLRLLLLLAPCGAGFA) form the signal peptide. Asn-35 and Asn-77 each carry an N-linked (GlcNAc...) asparagine glycan. A disulfide bond links Cys-167 and Cys-176. 190 to 192 (WDW) serves as a coordination point for substrate. An N-linked (GlcNAc...) asparagine glycan is attached at Asn-297. Residue Asn-456 participates in substrate binding. The Proton donor role is filled by Glu-457. 3 cysteine pairs are disulfide-bonded: Cys-540-Cys-629, Cys-732-Cys-761, and Cys-764-Cys-769. Glu-554 serves as the catalytic Nucleophile. N-linked (GlcNAc...) asparagine glycosylation is present at Asn-803.

It belongs to the glycosyl hydrolase 2 family. Monomer. Post-translationally, N-glycosylated. In terms of tissue distribution, detected in kidney (at protein level). Found in spleen and to a lesser extent in liver. Not detected in kidney or brain.

The protein localises to the lysosome. It carries out the reaction Hydrolysis of terminal, non-reducing beta-D-mannose residues in beta-D-mannosides.. Its pathway is glycan metabolism; N-glycan degradation. Functionally, exoglycosidase that cleaves the single beta-linked mannose residue from the non-reducing end of all N-linked glycoprotein oligosaccharides. The protein is Beta-mannosidase (MANBA) of Capra hircus (Goat).